Consider the following 185-residue polypeptide: uncharacterized protein (185 aa).

Helical transmembrane passes span 5-25, 63-83, 97-117, and 149-169; these read SFLISTLFDLYIMVVILRIWL, LATVLFAYVLCVLKFVVLILI, FLGLLSLIKAAGGLLFWVLLI, and IIPAIGGLDLSVLVLFIGLQF.

This sequence belongs to the YggT family.

The protein localises to the cell membrane. This is an uncharacterized protein from Vibrio alginolyticus.